A 226-amino-acid polypeptide reads, in one-letter code: Reticulon-like protein B16 (226 aa).

The Reticulon domain occupies 41-224 (AADLLLWRRR…RLSWSLSKDK (184 aa)). Transmembrane regions (helical) follow at residues 54-74 (LGVIIISTVAWLIFEFSGLPF), 75-95 (LSVSSDVLLIVIMISFVHARV), and 149-169 (VVICLWLLSAIGSYISLCTLL).

The protein resides in the endoplasmic reticulum membrane. The sequence is that of Reticulon-like protein B16 (RTNLB16) from Arabidopsis thaliana (Mouse-ear cress).